The following is a 456-amino-acid chain: Carnosine N-methyltransferase unmet (456 aa).

S-adenosyl-L-methionine contacts are provided by Arg-154, Gly-195, Glu-216, Asp-282, Phe-283, and Cys-299. Residues Asp-303, His-334, and Tyr-385 each coordinate carnosine. The span at 402–418 (RGKRKASREPHDLIVRE) shows a compositional bias: basic and acidic residues. Residues 402–456 (RGKRKASREPHDLIVREDSEEEGEQQPERNETEEKQQLKPLATANCETEIKEQPS) are disordered. Phosphoserine is present on residues Ser-408 and Ser-420. The span at 427–438 (QPERNETEEKQQ) shows a compositional bias: basic and acidic residues.

The protein belongs to the carnosine N-methyltransferase family. As to quaternary structure, associates with the GATOR2 complex; the interaction is probably direct and is inhibited by S-adenosyl-L-methionine binding. Associates with the GATOR1 complex; the interaction is probably indirect and mediated by the GATOR2 complex.

It catalyses the reaction carnosine + S-adenosyl-L-methionine = anserine + S-adenosyl-L-homocysteine + H(+). Functionally, S-adenosyl-L-methionine-binding protein that acts as a sensor to signal methionine availability to the mTORC1 signaling pathway. Associates with the GATOR2 complex in the absence of methionine to inhibit mTORC1 signaling, but dissociates in the presence of the methionine derivative S-adenosyl-L-methionine; S-adenosyl-L-homocysteine binding does not induce dissociation. Required for mTORC1 pathway response to methionine starvation. Exerts a protective function on developing egg chambers by inhibiting mTORC1 signaling under starvation conditions. May also function as a N-methyltransferase that mediates the formation of anserine (beta-alanyl-N(Pi)-methyl-L-histidine) from carnosine. It is unclear whether this protein has retained N-methyltransferase activity or if it is an evolutionary intermediate whose substrate binding ability has been co-opted to function as a nutrient sensor for mTORC1 signaling. The polypeptide is Carnosine N-methyltransferase unmet (Drosophila melanogaster (Fruit fly)).